The sequence spans 212 residues: ATP phosphoribosyltransferase (212 aa).

Belongs to the ATP phosphoribosyltransferase family. Short subfamily. As to quaternary structure, heteromultimer composed of HisG and HisZ subunits.

The protein localises to the cytoplasm. The catalysed reaction is 1-(5-phospho-beta-D-ribosyl)-ATP + diphosphate = 5-phospho-alpha-D-ribose 1-diphosphate + ATP. It participates in amino-acid biosynthesis; L-histidine biosynthesis; L-histidine from 5-phospho-alpha-D-ribose 1-diphosphate: step 1/9. Functionally, catalyzes the condensation of ATP and 5-phosphoribose 1-diphosphate to form N'-(5'-phosphoribosyl)-ATP (PR-ATP). Has a crucial role in the pathway because the rate of histidine biosynthesis seems to be controlled primarily by regulation of HisG enzymatic activity. The protein is ATP phosphoribosyltransferase (hisG) of Halalkalibacterium halodurans (strain ATCC BAA-125 / DSM 18197 / FERM 7344 / JCM 9153 / C-125) (Bacillus halodurans).